The chain runs to 79 residues: D-alanyl carrier protein (79 aa).

Positions 1–76 (MKEQIFDIIE…KIAARVQEKK (76 aa)) constitute a Carrier domain. The residue at position 34 (Ser-34) is an O-(pantetheine 4'-phosphoryl)serine.

Belongs to the DltC family. 4'-phosphopantetheine is transferred from CoA to a specific serine of apo-DCP.

The protein localises to the cytoplasm. It functions in the pathway cell wall biogenesis; lipoteichoic acid biosynthesis. Carrier protein involved in the D-alanylation of lipoteichoic acid (LTA). The loading of thioester-linked D-alanine onto DltC is catalyzed by D-alanine--D-alanyl carrier protein ligase DltA. The DltC-carried D-alanyl group is further transferred to cell membrane phosphatidylglycerol (PG) by forming an ester bond, probably catalyzed by DltD. D-alanylation of LTA plays an important role in modulating the properties of the cell wall in Gram-positive bacteria, influencing the net charge of the cell wall. This is D-alanyl carrier protein from Lactococcus lactis subsp. lactis (strain IL1403) (Streptococcus lactis).